The chain runs to 103 residues: Potassium voltage-gated channel subfamily E member 3 (103 aa).

Residues asparagine 5, asparagine 22, and asparagine 41 are each glycosylated (N-linked (GlcNAc...) asparagine). Residues 32–53 (RPGPGLGPDNQTEERRASLPGR) are disordered. A compositionally biased stretch (basic and acidic residues) spans 43 to 53 (TEERRASLPGR). Residues 57-77 (SYMYILFVMFLFAVTVGSLIL) traverse the membrane as a helical segment. Residues 68–79 (FAVTVGSLILGY) form an interaction with KCNQ1 region. At 78-103 (GYTRSRKVDKRSDPYHVYIKNRVSMI) the chain is on the cytoplasmic side.

Belongs to the potassium channel KCNE family. In terms of assembly, interacts with KCNB1. Interacts with KCNC2. Associates with KCNC4/Kv3.4. Interacts with KCNQ1; associates with a KCNQ1:KCNE3 stoichiometry of 4:4; produces a current with nearly instantaneous activation with a linear current-voltage relationship and alters membrane raft localization; affects KCNQ1 structure and gating properties. In terms of tissue distribution, expressed in hippocampal neurons (at protein level). Widely expressed with highest levels in kidney and moderate levels in small intestine.

It is found in the cell membrane. Its subcellular location is the cytoplasm. It localises to the perikaryon. The protein localises to the cell projection. The protein resides in the dendrite. It is found in the membrane raft. Ancillary protein that functions as a regulatory subunit of the voltage-gated potassium (Kv) channel complex composed of pore-forming and potassium-conducting alpha subunits and of regulatory beta subunits. KCNE3 beta subunit modulates the gating kinetics and enhances stability of the channel complex. Alters the gating of the delayed rectifier Kv channel containing KCNB1 alpha subunit. Associates with KCNC4/Kv3.4 alpha subunit to form the subthreshold Kv channel in skeletal muscle and to establish the resting membrane potential (RMP) in muscle cells. Association with KCNQ1/KCLQT1 alpha subunit may form the intestinal cAMP-stimulated potassium channel involved in chloride secretion that produces a current with nearly instantaneous activation with a linear current-voltage relationship. The chain is Potassium voltage-gated channel subfamily E member 3 from Homo sapiens (Human).